We begin with the raw amino-acid sequence, 710 residues long: MSKQTFTTTFAGKPLVVEVGQVAKQANGATVVRYGESTVLTAAVMSKKMATGDFFPLQVNYEEKMYAAGKFPGGFMKREGRPSTDATLTARLIDRPIRPMFAEGFRNEVQVINTVLSYDENASAPMAAMFGSSLALSISDIPFNGPIAGVQVGYIDGEFIINPDKEQMEASLLELTVAGSKEAINMVESGAKELSEDIMLEALLKGHQAIQELIAFQEQIVAVVGKEKAEVELLQVDADLQADIVAKYNAQLQKAVQVEEKKAREAATEAVKEMVKAEYEERYAEDENLATIMRDVAEILEQMEHAEVRRLITEDKIRPDGRKIDEIRPLDAVVDFLPKVHGSGLFTRGQTQALSVLTLAPMGETQIIDGLAPEYKKSFLHHYNFPQYSVGETGRYGAAGRREIGHGALGERALEQVLPSLEEFPYAIRLVAEVLESNGSSSQASICAGTLALMAGGVPIKAPVAGIAMGLISDGTNYTVLTDIQGLEDHFGDMDFKVAGTREGITALQMDIKIAGITPQILEEALAQAKKARFEILDVIEATIAEPRPELAPTAPKIDTIKIDVDKIKVVIGKGGETIDKIIAETGVKIDIDDEGNVSIYSSDQAAIDRTKEIIAGLVREAKVGEVYHAKVIRIEKFGAFVNLFDKTDALVHISEIAWTRTTNVSDVLEVGEDVDVKVIKIDEKGRVDASMKALIPRPPKPEKKEEKHD.

2 residues coordinate Mg(2+): Asp489 and Asp495. In terms of domain architecture, KH spans 556-615; sequence PKIDTIKIDVDKIKVVIGKGGETIDKIIAETGVKIDIDDEGNVSIYSSDQAAIDRTKEII. The S1 motif domain occupies 625-693; it reads GEVYHAKVIR…EKGRVDASMK (69 aa). The disordered stretch occupies residues 691–710; the sequence is SMKALIPRPPKPEKKEEKHD. Residues 700–710 are compositionally biased toward basic and acidic residues; that stretch reads PKPEKKEEKHD.

This sequence belongs to the polyribonucleotide nucleotidyltransferase family. It depends on Mg(2+) as a cofactor.

It is found in the cytoplasm. The catalysed reaction is RNA(n+1) + phosphate = RNA(n) + a ribonucleoside 5'-diphosphate. Its function is as follows. Involved in mRNA degradation. Catalyzes the phosphorolysis of single-stranded polyribonucleotides processively in the 3'- to 5'-direction. The polypeptide is Polyribonucleotide nucleotidyltransferase (Streptococcus pyogenes serotype M18 (strain MGAS8232)).